The primary structure comprises 162 residues: NADH-quinone oxidoreductase subunit I (162 aa).

4Fe-4S ferredoxin-type domains lie at 54–83 and 93–122; these read RRYE…IESE and TRYD…ETQI. The [4Fe-4S] cluster site is built by Cys-63, Cys-66, Cys-69, Cys-73, Cys-102, Cys-105, Cys-108, and Cys-112.

It belongs to the complex I 23 kDa subunit family. As to quaternary structure, NDH-1 is composed of 14 different subunits. Subunits NuoA, H, J, K, L, M, N constitute the membrane sector of the complex. Requires [4Fe-4S] cluster as cofactor.

The protein resides in the cell inner membrane. The enzyme catalyses a quinone + NADH + 5 H(+)(in) = a quinol + NAD(+) + 4 H(+)(out). Functionally, NDH-1 shuttles electrons from NADH, via FMN and iron-sulfur (Fe-S) centers, to quinones in the respiratory chain. The immediate electron acceptor for the enzyme in this species is believed to be ubiquinone. Couples the redox reaction to proton translocation (for every two electrons transferred, four hydrogen ions are translocated across the cytoplasmic membrane), and thus conserves the redox energy in a proton gradient. In Burkholderia vietnamiensis (strain G4 / LMG 22486) (Burkholderia cepacia (strain R1808)), this protein is NADH-quinone oxidoreductase subunit I.